A 685-amino-acid chain; its full sequence is Protein hook (685 aa).

A Calponin-homology (CH) domain is found at Met6 to Ala122. Residues Gln134–Lys570 adopt a coiled-coil conformation. Disordered regions lie at residues Ala430–Val449, Leu593–Val625, and Pro661–Lys685. Over residues Ala602 to Gly623 the composition is skewed to low complexity. Over residues Pro661 to Arg670 the composition is skewed to polar residues.

This sequence belongs to the hook family. Homodimer. Interacts with microtubules via its N-terminus.

It is found in the cytoplasm. Its subcellular location is the cytoskeleton. It localises to the endosome. Its function is as follows. Involved in endocytic trafficking. Probably acts as a cytoskeletal linker protein that tethers endosome vesicles to the cytoskeleton. The chain is Protein hook from Aedes aegypti (Yellowfever mosquito).